The chain runs to 205 residues: Small ribosomal subunit protein uS4 (205 aa).

The region spanning 95–163 (RRLDNVVYRL…FKENLESRDP (69 aa)) is the S4 RNA-binding domain.

It belongs to the universal ribosomal protein uS4 family. As to quaternary structure, part of the 30S ribosomal subunit. Contacts protein S5. The interaction surface between S4 and S5 is involved in control of translational fidelity.

In terms of biological role, one of the primary rRNA binding proteins, it binds directly to 16S rRNA where it nucleates assembly of the body of the 30S subunit. Its function is as follows. With S5 and S12 plays an important role in translational accuracy. This Persephonella marina (strain DSM 14350 / EX-H1) protein is Small ribosomal subunit protein uS4.